The primary structure comprises 355 residues: Histidinol-phosphate aminotransferase 2 (355 aa).

An N6-(pyridoxal phosphate)lysine modification is found at lysine 213.

This sequence belongs to the class-II pyridoxal-phosphate-dependent aminotransferase family. Histidinol-phosphate aminotransferase subfamily. As to quaternary structure, homodimer. The cofactor is pyridoxal 5'-phosphate.

It catalyses the reaction L-histidinol phosphate + 2-oxoglutarate = 3-(imidazol-4-yl)-2-oxopropyl phosphate + L-glutamate. Its pathway is amino-acid biosynthesis; L-histidine biosynthesis; L-histidine from 5-phospho-alpha-D-ribose 1-diphosphate: step 7/9. In Burkholderia lata (strain ATCC 17760 / DSM 23089 / LMG 22485 / NCIMB 9086 / R18194 / 383), this protein is Histidinol-phosphate aminotransferase 2.